The primary structure comprises 375 residues: CMP-N-acetylneuraminate-beta-1,4-galactoside alpha-2,3-sialyltransferase (375 aa).

Over 1–8 (MGLLVFVR) the chain is Cytoplasmic. The chain crosses the membrane as a helical; Signal-anchor for type II membrane protein span at residues 9–28 (NLLLALCLFLVLGFLYYSAW). Over 29–375 (KLHLLQWEED…RVITDLSSGI (347 aa)) the chain is Lumenal. Residues asparagine 80 and asparagine 171 are each glycosylated (N-linked (GlcNAc...) asparagine). A disulfide bridge connects residues cysteine 160 and cysteine 314.

This sequence belongs to the glycosyltransferase 29 family. In terms of processing, the soluble form derives from the membrane form by proteolytic processing. As to expression, highly expressed in adult skeletal muscle and in all fetal tissues examined and to a much lesser extent in placenta, lung and liver.

Its subcellular location is the golgi apparatus. It localises to the golgi stack membrane. The protein resides in the secreted. The catalysed reaction is a beta-D-galactosyl-(1-&gt;4)-N-acetyl-beta-D-glucosaminyl derivative + CMP-N-acetyl-beta-neuraminate = an N-acetyl-alpha-neuraminyl-(2-&gt;3)-beta-D-galactosyl-(1-&gt;4)-N-acetyl-beta-D-glucosaminyl derivative + CMP + H(+). Its pathway is protein modification; protein glycosylation. In terms of biological role, catalyzes the formation of the NeuAc-alpha-2,3-Gal-beta-1,4-GlcNAc-, NeuAc-alpha-2,3-Gal-beta-1,3-GlcNAc- and NeuAc-alpha-2,3-Gal-beta-1,3-GalNAc- sequences found in terminal carbohydrate groups of glycoproteins and glycolipids. The highest activity is toward Gal-beta-1,3-GlcNAc and the lowest toward Gal-beta-1,3-GalNAc. The sequence is that of CMP-N-acetylneuraminate-beta-1,4-galactoside alpha-2,3-sialyltransferase (ST3GAL3) from Homo sapiens (Human).